The primary structure comprises 78 residues: Protein M6 (78 aa).

The protein belongs to the A9/FIL1 family. In terms of tissue distribution, tapetum of anthers.

The protein resides in the secreted. This Lilium henryi (Henry's lily) protein is Protein M6 (M6).